A 90-amino-acid polypeptide reads, in one-letter code: Probable Fe(2+)-trafficking protein (90 aa).

Belongs to the Fe(2+)-trafficking protein family.

Could be a mediator in iron transactions between iron acquisition and iron-requiring processes, such as synthesis and/or repair of Fe-S clusters in biosynthetic enzymes. This chain is Probable Fe(2+)-trafficking protein, found in Bordetella avium (strain 197N).